The chain runs to 1417 residues: Cytoadherence-linked asexual protein 3.1 (1417 aa).

The N-terminal stretch at 1–24 (MVSFFKTPIFILIIFLYLNEKVIC) is a signal peptide. 4 disulfide bridges follow: Cys-333–Cys-361, Cys-407–Cys-413, Cys-517–Cys-545, and Cys-521–Cys-542. A helical transmembrane segment spans residues 1204 to 1224 (LANGFMYAFCFFAISQMYAYF). Residues 1383–1417 (TYIDTEKMNEADSADSDDEKDSDTPDDELMISRFH) form a disordered region. The span at 1394-1411 (DSADSDDEKDSDTPDDEL) shows a compositional bias: acidic residues.

In terms of assembly, self-associates. Component of the RhopH complex. RhopH complex is at least composed of CLAG3.1/CLAG3.2, RhopH2 and RhopH3 with a 1:1:1 subunit stoichiometry. CLAG3.1/CLAG3.2 mediates subunit association through independent contacts with RhopH2 and RhopH3, which do not directly interact with one another. Interacts with RhopH2. Interacts with RhopH3.

The protein resides in the host cell membrane. The protein localises to the host cytoplasm. It localises to the cytoplasmic vesicle. Its subcellular location is the secretory vesicle. It is found in the rhoptry. Functionally, participates in the formation of new permeability pathways in Plasmodium-infected erythrocytes enabling the uptake of nutrients from the blood plasma. This Plasmodium falciparum protein is Cytoadherence-linked asexual protein 3.1.